We begin with the raw amino-acid sequence, 272 residues long: ATP phosphoribosyltransferase regulatory subunit (272 aa).

This sequence belongs to the class-II aminoacyl-tRNA synthetase family. HisZ subfamily. In terms of assembly, heteromultimer composed of HisG and HisZ subunits.

The protein localises to the cytoplasm. The protein operates within amino-acid biosynthesis; L-histidine biosynthesis; L-histidine from 5-phospho-alpha-D-ribose 1-diphosphate: step 1/9. Required for the first step of histidine biosynthesis. May allow the feedback regulation of ATP phosphoribosyltransferase activity by histidine. This chain is ATP phosphoribosyltransferase regulatory subunit, found in Staphylococcus aureus (strain Mu3 / ATCC 700698).